The following is a 227-amino-acid chain: Fibrillarin-like rRNA/tRNA 2'-O-methyltransferase (227 aa).

S-adenosyl-L-methionine-binding positions include 82–83 (TT), 100–101 (EF), 125–126 (DA), and 145–148 (DVAQ).

Belongs to the methyltransferase superfamily. Fibrillarin family. Interacts with nop5. Component of box C/D small ribonucleoprotein (sRNP) particles that contain rpl7ae, FlpA and nop5, plus a guide RNA.

In terms of biological role, involved in pre-rRNA and tRNA processing. Utilizes the methyl donor S-adenosyl-L-methionine to catalyze the site-specific 2'-hydroxyl methylation of ribose moieties in rRNA and tRNA. Site specificity is provided by a guide RNA that base pairs with the substrate. Methylation occurs at a characteristic distance from the sequence involved in base pairing with the guide RNA. The chain is Fibrillarin-like rRNA/tRNA 2'-O-methyltransferase from Methanosarcina acetivorans (strain ATCC 35395 / DSM 2834 / JCM 12185 / C2A).